The sequence spans 67 residues: uncharacterized protein (67 aa).

A signal peptide spans 1-28 (MSHVSVIAARLLVWVGILLCLGVPQLWA). Asn-39 carries N-linked (GlcNAc...) asparagine; by host glycosylation.

This is an uncharacterized protein from Invertebrate iridescent virus 3 (IIV-3).